The primary structure comprises 23 residues: Ascaphin-1 (23 aa).

Position 23 is an asparagine amide (Asn-23).

Expressed by the skin glands.

The protein resides in the secreted. Antimicrobial peptide that shows higher potency against Gram-negative bacteria than against Gram-positive bacteria. Has a very week hemolytic activity. The protein is Ascaphin-1 of Ascaphus truei (Coastal tailed frog).